Reading from the N-terminus, the 330-residue chain is Beta-hexosaminidase (330 aa).

Residues aspartate 62, arginine 70, arginine 133, and 163-164 (KH) contribute to the substrate site. Histidine 176 acts as the Proton donor/acceptor in catalysis. Aspartate 246 (nucleophile) is an active-site residue.

This sequence belongs to the glycosyl hydrolase 3 family. NagZ subfamily.

The protein localises to the cytoplasm. The enzyme catalyses Hydrolysis of terminal non-reducing N-acetyl-D-hexosamine residues in N-acetyl-beta-D-hexosaminides.. It functions in the pathway cell wall biogenesis; peptidoglycan recycling. Functionally, plays a role in peptidoglycan recycling by cleaving the terminal beta-1,4-linked N-acetylglucosamine (GlcNAc) from peptide-linked peptidoglycan fragments, giving rise to free GlcNAc, anhydro-N-acetylmuramic acid and anhydro-N-acetylmuramic acid-linked peptides. The protein is Beta-hexosaminidase of Idiomarina loihiensis (strain ATCC BAA-735 / DSM 15497 / L2-TR).